Here is a 518-residue protein sequence, read N- to C-terminus: Nuclear receptor ROR-gamma (518 aa).

Residues 1 to 30 (MDRAPQRQHRASRELLAAKKTHTSQIEVIP) form a modulating region. 2 consecutive NR C4-type zinc fingers follow at residues 31–51 (CKIC…CEGC) and 67–91 (CTRQ…LQKC). The nuclear receptor DNA-binding region spans 31 to 96 (CKICGDKSSG…RLQKCLALGM (66 aa)). Disordered regions lie at residues 105–183 (RMSK…SGSG) and 238–258 (HPGL…SFRS). The span at 109 to 118 (KQRDSLHAEV) shows a compositional bias: basic and acidic residues. Over residues 119–130 (QKQLQQRQQQQQ) the composition is skewed to low complexity. The NR LBD domain occupies 269-508 (EIEHLVQSVC…PPLYKELFST (240 aa)). Positions 501 to 506 (LYKELF) match the AF-2 motif.

It belongs to the nuclear hormone receptor family. NR1 subfamily. Interacts (via AF-2 motif) with the coactivator NCOA2 (via LXXLL motif). Interacts with the corepressor NCOR1. Interacts with CRY1. Interacts (via AF-2 motif) with the coactivators NCOA1 and PPARGC1A (via LXXLL motif). Interacts (via AF-2 motif) with PROX1. Interacts with FOXP3. Interacts with NR0B2. As to expression, isoform 1 is widely expressed in many tissues, including liver and adipose, and highly expressed in skeletal muscle. Isoform 2 is primarily expressed in immature thymocytes.

The protein localises to the nucleus. Functionally, nuclear receptor that binds DNA as a monomer to ROR response elements (RORE) containing a single core motif half-site 5'-AGGTCA-3' preceded by a short A-T-rich sequence. Key regulator of cellular differentiation, immunity, peripheral circadian rhythm as well as lipid, steroid, xenobiotics and glucose metabolism. Considered to have intrinsic transcriptional activity, have some natural ligands like oxysterols that act as agonists (25-hydroxycholesterol) or inverse agonists (7-oxygenated sterols), enhancing or repressing the transcriptional activity, respectively. Recruits distinct combinations of cofactors to target gene regulatory regions to modulate their transcriptional expression, depending on the tissue, time and promoter contexts. Regulates the circadian expression of clock genes such as CRY1, BMAL1 and NR1D1 in peripheral tissues and in a tissue-selective manner. Competes with NR1D1 for binding to their shared DNA response element on some clock genes such as BMAL1, CRY1 and NR1D1 itself, resulting in NR1D1-mediated repression or RORC-mediated activation of the expression, leading to the circadian pattern of clock genes expression. Therefore influences the period length and stability of the clock. Involved in the regulation of the rhythmic expression of genes involved in glucose and lipid metabolism, including PLIN2 and AVPR1A. Negative regulator of adipocyte differentiation through the regulation of early phase genes expression, such as MMP3. Controls adipogenesis as well as adipocyte size and modulates insulin sensitivity in obesity. In liver, has specific and redundant functions with RORA as positive or negative modulator of expression of genes encoding phase I and Phase II proteins involved in the metabolism of lipids, steroids and xenobiotics, such as SULT1E1. Also plays a role in the regulation of hepatocyte glucose metabolism through the regulation of G6PC1 and PCK1. Regulates the rhythmic expression of PROX1 and promotes its nuclear localization. Plays an indispensable role in the induction of IFN-gamma dependent anti-mycobacterial systemic immunity. Essential for thymopoiesis and the development of several secondary lymphoid tissues, including lymph nodes and Peyer's patches. Required for the generation of LTi (lymphoid tissue inducer) cells. Regulates thymocyte survival through DNA-binding on ROREs of target gene promoter regions and recruitment of coactivaros via the AF-2. Also plays a key role, downstream of IL6 and TGFB and synergistically with RORA, for lineage specification of uncommitted CD4(+) T-helper (T(H)) cells into T(H)17 cells, antagonizing the T(H)1 program. Probably regulates IL17 and IL17F expression on T(H) by binding to the essential enhancer conserved non-coding sequence 2 (CNS2) in the IL17-IL17F locus. May also play a role in the pre-TCR activation cascade leading to the maturation of alpha/beta T-cells and may participate in the regulation of DNA accessibility in the TCR-J(alpha) locus. The polypeptide is Nuclear receptor ROR-gamma (RORC) (Homo sapiens (Human)).